We begin with the raw amino-acid sequence, 157 residues long: Cyclic pyranopterin monophosphate synthase (157 aa).

Substrate-binding positions include 74–76 (MCH) and 112–113 (ME). D127 is a catalytic residue.

The protein belongs to the MoaC family. In terms of assembly, homohexamer; trimer of dimers.

It catalyses the reaction (8S)-3',8-cyclo-7,8-dihydroguanosine 5'-triphosphate = cyclic pyranopterin phosphate + diphosphate. It participates in cofactor biosynthesis; molybdopterin biosynthesis. Catalyzes the conversion of (8S)-3',8-cyclo-7,8-dihydroguanosine 5'-triphosphate to cyclic pyranopterin monophosphate (cPMP). In Sulfurovum sp. (strain NBC37-1), this protein is Cyclic pyranopterin monophosphate synthase.